A 283-amino-acid chain; its full sequence is Thymidylate synthase (283 aa).

Arg22 serves as a coordination point for dUMP. Cys160 serves as the catalytic Nucleophile. Residues 180-183 (RSCD), Asn191, and 221-223 (HIY) contribute to the dUMP site. Residue Asp183 participates in (6R)-5,10-methylene-5,6,7,8-tetrahydrofolate binding. Residue Ser282 participates in (6R)-5,10-methylene-5,6,7,8-tetrahydrofolate binding.

Belongs to the thymidylate synthase family. Bacterial-type ThyA subfamily. Homodimer.

It is found in the cytoplasm. The catalysed reaction is dUMP + (6R)-5,10-methylene-5,6,7,8-tetrahydrofolate = 7,8-dihydrofolate + dTMP. The protein operates within pyrimidine metabolism; dTTP biosynthesis. In terms of biological role, catalyzes the reductive methylation of 2'-deoxyuridine-5'-monophosphate (dUMP) to 2'-deoxythymidine-5'-monophosphate (dTMP) while utilizing 5,10-methylenetetrahydrofolate (mTHF) as the methyl donor and reductant in the reaction, yielding dihydrofolate (DHF) as a by-product. This enzymatic reaction provides an intracellular de novo source of dTMP, an essential precursor for DNA biosynthesis. This Haemophilus influenzae (strain PittGG) protein is Thymidylate synthase.